The following is a 365-amino-acid chain: Putrescine carbamoyltransferase (365 aa).

Carbamoyl phosphate contacts are provided by residues Ser54–Arg58, Arg105, and His132. His277–Pro280 is a putrescine binding site.

It belongs to the aspartate/ornithine carbamoyltransferase superfamily. PTCase family. Homotrimer.

It is found in the cytoplasm. The catalysed reaction is carbamoyl phosphate + putrescine = N-carbamoylputrescine + phosphate + H(+). The protein operates within amine and polyamine biosynthesis; putrescine biosynthesis via agmatine pathway; putrescine from N-carbamoylputrescine (transferase route): step 1/1. Its function is as follows. Catalyzes the phosphorolysis of N-carbamoylputrescine to form carbamoyl phosphate and putrescine. Is involved in the degradation pathway of the polyamine agmatine. This Mycoplasma capricolum subsp. capricolum (strain California kid / ATCC 27343 / NCTC 10154) protein is Putrescine carbamoyltransferase.